Consider the following 384-residue polypeptide: Galactokinase (384 aa).

A substrate-binding site is contributed by 34-37 (EHTD). ATP is bound at residue 123–129 (SSGLSSS). The Mg(2+) site is built by serine 129 and glutamate 161. The active-site Proton acceptor is the aspartate 173. Substrate is bound at residue tyrosine 222.

Belongs to the GHMP kinase family. GalK subfamily.

It localises to the cytoplasm. The enzyme catalyses alpha-D-galactose + ATP = alpha-D-galactose 1-phosphate + ADP + H(+). Its pathway is carbohydrate metabolism; galactose metabolism. Catalyzes the transfer of the gamma-phosphate of ATP to D-galactose to form alpha-D-galactose-1-phosphate (Gal-1-P). This is Galactokinase from Actinobacillus pleuropneumoniae (Haemophilus pleuropneumoniae).